The following is a 174-amino-acid chain: FAD synthase (174 aa).

Residues 34–35, 39–42, Asp-119, and Tyr-147 contribute to the ATP site; these read TF and HPGH.

It belongs to the archaeal FAD synthase family. Homodimer. Requires a divalent metal cation as cofactor.

It carries out the reaction FMN + ATP + H(+) = FAD + diphosphate. It participates in cofactor biosynthesis; FAD biosynthesis; FAD from FMN: step 1/1. In terms of biological role, catalyzes the transfer of the AMP portion of ATP to flavin mononucleotide (FMN) to produce flavin adenine dinucleotide (FAD) coenzyme. The sequence is that of FAD synthase from Methanococcus voltae (strain ATCC BAA-1334 / A3).